Reading from the N-terminus, the 456-residue chain is Na(+)-translocating NADH-quinone reductase subunit A (456 aa).

It belongs to the NqrA family. As to quaternary structure, composed of six subunits; NqrA, NqrB, NqrC, NqrD, NqrE and NqrF.

The enzyme catalyses a ubiquinone + n Na(+)(in) + NADH + H(+) = a ubiquinol + n Na(+)(out) + NAD(+). Its function is as follows. NQR complex catalyzes the reduction of ubiquinone-1 to ubiquinol by two successive reactions, coupled with the transport of Na(+) ions from the cytoplasm to the periplasm. NqrA to NqrE are probably involved in the second step, the conversion of ubisemiquinone to ubiquinol. The polypeptide is Na(+)-translocating NADH-quinone reductase subunit A (Rhodopirellula baltica (strain DSM 10527 / NCIMB 13988 / SH1)).